The chain runs to 311 residues: Methionyl-tRNA formyltransferase (311 aa).

112–115 is a binding site for (6S)-5,6,7,8-tetrahydrofolate; the sequence is SLLP.

This sequence belongs to the Fmt family.

It catalyses the reaction L-methionyl-tRNA(fMet) + (6R)-10-formyltetrahydrofolate = N-formyl-L-methionyl-tRNA(fMet) + (6S)-5,6,7,8-tetrahydrofolate + H(+). In terms of biological role, attaches a formyl group to the free amino group of methionyl-tRNA(fMet). The formyl group appears to play a dual role in the initiator identity of N-formylmethionyl-tRNA by promoting its recognition by IF2 and preventing the misappropriation of this tRNA by the elongation apparatus. This Bartonella henselae (strain ATCC 49882 / DSM 28221 / CCUG 30454 / Houston 1) (Rochalimaea henselae) protein is Methionyl-tRNA formyltransferase.